Consider the following 469-residue polypeptide: Glutamate--tRNA ligase (469 aa).

The 'HIGH' region signature appears at 9 to 19; sequence PSPTGFLHVGG. Zn(2+) is bound by residues Cys98, Cys100, Cys125, and Asp127. The 'KMSKS' region motif lies at 236–240; it reads KLSKR. Position 239 (Lys239) interacts with ATP.

The protein belongs to the class-I aminoacyl-tRNA synthetase family. Glutamate--tRNA ligase type 1 subfamily. Monomer. Requires Zn(2+) as cofactor.

The protein localises to the cytoplasm. It catalyses the reaction tRNA(Glu) + L-glutamate + ATP = L-glutamyl-tRNA(Glu) + AMP + diphosphate. Its function is as follows. Catalyzes the attachment of glutamate to tRNA(Glu) in a two-step reaction: glutamate is first activated by ATP to form Glu-AMP and then transferred to the acceptor end of tRNA(Glu). This Shewanella putrefaciens (strain CN-32 / ATCC BAA-453) protein is Glutamate--tRNA ligase.